The sequence spans 300 residues: Pantoate kinase (300 aa).

Belongs to the GHMP kinase family. PoK subfamily. Homodimer.

It carries out the reaction (R)-pantoate + ATP = (R)-4-phosphopantoate + ADP + H(+). Its pathway is cofactor biosynthesis; coenzyme A biosynthesis. Its activity is regulated as follows. Moderately stimulated in the presence of potassium cations. Inhibited by increasing concentrations of pantoate. Activity is not affected by CoA/acetyl-CoA. Its function is as follows. Phosphorylates (R)-pantoate to form (R)-4-phosphopantoate in the CoA biosynthesis pathway. Displays broad nucleotide specificity and utilizes ATP, GTP, UTP, and CTP with comparable catalytic efficiencies. The polypeptide is Pantoate kinase (Thermococcus kodakarensis (strain ATCC BAA-918 / JCM 12380 / KOD1) (Pyrococcus kodakaraensis (strain KOD1))).